Reading from the N-terminus, the 381-residue chain is Tumor necrosis factor receptor superfamily member 10B (381 aa).

The N-terminal stretch at 1-52 is a signal peptide; that stretch reads MEPPGPSTPTASAAARADHYTPGLRPLPKRRLLYSFALLLAVLQAVFVPVTA. TNFR-Cys repeat units follow at residues 26-86, 87-129, and 130-169; these read PLPK…GNCK, PCRE…NTVC, and RCKP…NRKC. The Extracellular portion of the chain corresponds to 53 to 180; it reads NPAHNRPAGL…SKTAWASWHK (128 aa). 7 disulfides stabilise this stretch: Cys74–Cys85, Cys88–Cys105, Cys108–Cys121, Cys111–Cys129, Cys131–Cys145, Cys148–Cys161, and Cys151–Cys169. The helical transmembrane segment at 181–201 threads the bilayer; it reads LGLWIGLLVPVVLLIGALLVW. At 202-381 the chain is on the cytoplasmic side; sequence KTGAWRQWLL…ETGPGGSQCV (180 aa). A disordered region spans residues 228 to 260; the sequence is HSSLLDRQTSSTTNDSNHNTEPGKTQKTGKKLL. Positions 236–247 are enriched in low complexity; the sequence is TSSTTNDSNHNT. Positions 273 to 356 constitute a Death domain; that stretch reads KFIFEYCSDI…DAMEKIEDYA (84 aa). A (Microbial infection) N-beta-linked (GlcNAc) arginine glycan is attached at Arg293.

In terms of assembly, monomer. Can interact with TRADD and RIPK1. Three TNFRSF10B molecules interact with the TNFSF10 homotrimer. In the absence of stimulation, interacts with BIRC2, DDX3X and GSK3B. The interaction with BIRC2 and DDX3X is further enhanced upon receptor stimulation and accompanied by DDX3X and BIRC2 cleavage. In terms of processing, (Microbial infection) Glycosylated at Arg-293 by S.typhimurium protein Ssek3. Highly expressed in heart, lung and kidney.

The protein resides in the membrane. Functionally, receptor for the cytotoxic ligand TNFSF10/TRAIL. The adapter molecule FADD recruits caspase-8 to the activated receptor. The resulting death-inducing signaling complex (DISC) performs caspase-8 proteolytic activation which initiates the subsequent cascade of caspases (aspartate-specific cysteine proteases) mediating apoptosis. Promotes the activation of NF-kappa-B. Essential for ER stress-induced apoptosis. In Mus musculus (Mouse), this protein is Tumor necrosis factor receptor superfamily member 10B (Tnfrsf10b).